A 405-amino-acid chain; its full sequence is Cytoplasmic tRNA 2-thiolation protein 2 (405 aa).

This sequence belongs to the CTU2/NCS2 family.

It localises to the cytoplasm. Its pathway is tRNA modification; 5-methoxycarbonylmethyl-2-thiouridine-tRNA biosynthesis. Functionally, plays a central role in 2-thiolation of mcm(5)S(2)U at tRNA wobble positions of tRNA(Lys), tRNA(Glu) and tRNA(Gln). May act by forming a heterodimer with NCS6/CTU1 that ligates sulfur from thiocarboxylated URM1 onto the uridine of tRNAs at wobble position. The polypeptide is Cytoplasmic tRNA 2-thiolation protein 2 (Drosophila persimilis (Fruit fly)).